A 361-amino-acid polypeptide reads, in one-letter code: Phosphoserine aminotransferase (361 aa).

Residue R43 coordinates L-glutamate. Residues 77–78 (AS), W103, T153, D173, and Q196 each bind pyridoxal 5'-phosphate. Position 197 is an N6-(pyridoxal phosphate)lysine (K197). 238–239 (NT) serves as a coordination point for pyridoxal 5'-phosphate.

This sequence belongs to the class-V pyridoxal-phosphate-dependent aminotransferase family. SerC subfamily. Homodimer. The cofactor is pyridoxal 5'-phosphate.

It is found in the cytoplasm. The catalysed reaction is O-phospho-L-serine + 2-oxoglutarate = 3-phosphooxypyruvate + L-glutamate. The enzyme catalyses 4-(phosphooxy)-L-threonine + 2-oxoglutarate = (R)-3-hydroxy-2-oxo-4-phosphooxybutanoate + L-glutamate. Its pathway is amino-acid biosynthesis; L-serine biosynthesis; L-serine from 3-phospho-D-glycerate: step 2/3. It functions in the pathway cofactor biosynthesis; pyridoxine 5'-phosphate biosynthesis; pyridoxine 5'-phosphate from D-erythrose 4-phosphate: step 3/5. Catalyzes the reversible conversion of 3-phosphohydroxypyruvate to phosphoserine and of 3-hydroxy-2-oxo-4-phosphonooxybutanoate to phosphohydroxythreonine. This chain is Phosphoserine aminotransferase, found in Ectopseudomonas mendocina (strain ymp) (Pseudomonas mendocina).